Here is a 301-residue protein sequence, read N- to C-terminus: NADH-ubiquinone oxidoreductase chain 1 (301 aa).

The next 8 helical transmembrane spans lie at 4 to 24 (IIPILLAVAFLTLLERKVLGY), 62 to 82 (LALFIIAPTLALTLALMMWIP), 96 to 116 (ILFMLALSSLAVYAILWSGWA), 140 to 160 (LAIIILSILLMNGSFTLSTLI), 165 to 185 (YTWLIMPSWPLAMMWFISTIA), 216 to 236 (LFFLAEYANIIMMNALTIILF), 247 to 267 (EMYTANFMLKALLFTTFFLWI), and 279 to 299 (LMHLLWKNFLPLTLVMCMWHV).

It belongs to the complex I subunit 1 family.

Its subcellular location is the mitochondrion inner membrane. The enzyme catalyses a ubiquinone + NADH + 5 H(+)(in) = a ubiquinol + NAD(+) + 4 H(+)(out). Core subunit of the mitochondrial membrane respiratory chain NADH dehydrogenase (Complex I) that is believed to belong to the minimal assembly required for catalysis. Complex I functions in the transfer of electrons from NADH to the respiratory chain. The immediate electron acceptor for the enzyme is believed to be ubiquinone. The polypeptide is NADH-ubiquinone oxidoreductase chain 1 (MT-ND1) (Nyctalus noctula (Noctule bat)).